The following is a 246-amino-acid chain: Predicted GPI-anchored protein 33 (246 aa).

Residues 1–16 form the signal peptide; the sequence is MRGIILLSFVLTSCLA. An N-linked (GlcNAc...) asparagine glycan is attached at Asn-214. Residue Asn-219 is the site of GPI-anchor amidated asparagine attachment. Positions 220–246 are cleaved as a propeptide — removed in mature form; that stretch reads AAGVYSTNSVLVFVSICIGFIGGSLGI.

It is found in the cell membrane. This chain is Predicted GPI-anchored protein 33 (PGA33), found in Candida albicans (strain SC5314 / ATCC MYA-2876) (Yeast).